Reading from the N-terminus, the 75-residue chain is uncharacterized protein (75 aa).

This is an uncharacterized protein from Halalkalibacterium halodurans (strain ATCC BAA-125 / DSM 18197 / FERM 7344 / JCM 9153 / C-125) (Bacillus halodurans).